A 248-amino-acid polypeptide reads, in one-letter code: MARTFFIGGNFKMNGTKASIKEIVERLNSASIPSNVEVVIAPPAAYLDHAVSLNKKAQVSVAAQNAYLKASGAFTGENSVEQIKDVGAEWVILGHSERRTYFHETDEFIADKTKFALDSGVKVILCIGETLEEKQKGITLEVVQRQLQAVLDKVQDWTNVVVAYEPVWAIGTGLAATSDDAQAIHHSIREFLAKKLSKDTAEKIRILYGGSANGKNAVTFKDKADVDGFLVGGASLKPEFVDIINSRV.

Substrate contacts are provided by Asn10 and Lys12. His95 serves as the catalytic Electrophile. The Proton acceptor role is filled by Glu165.

This sequence belongs to the triosephosphate isomerase family. As to quaternary structure, homodimer.

The enzyme catalyses D-glyceraldehyde 3-phosphate = dihydroxyacetone phosphate. Its pathway is carbohydrate biosynthesis; gluconeogenesis. It functions in the pathway carbohydrate degradation; glycolysis; D-glyceraldehyde 3-phosphate from glycerone phosphate: step 1/1. This Kluyveromyces marxianus (Yeast) protein is Triosephosphate isomerase (TPI1).